A 444-amino-acid chain; its full sequence is Protein-serine O-palmitoleoyltransferase porcupine (444 aa).

10 helical membrane passes run Asn-29 to Trp-49, Val-81 to Gly-101, Phe-128 to Val-150, Thr-163 to Phe-183, Leu-201 to Ser-221, Tyr-249 to Ala-269, Phe-304 to Ala-324, Asp-326 to Phe-346, Val-383 to Met-403, and Trp-420 to Leu-440. His-323 is an active-site residue.

It belongs to the membrane-bound acyltransferase family. Porcupine subfamily.

The protein resides in the membrane. It carries out the reaction [Wnt protein]-L-serine + (9Z)-hexadecenoyl-CoA = [Wnt protein]-O-(9Z)-hexadecenoyl-L-serine + CoA. Key regulator of the Wnt signaling pathway that mediates lipid modification of Wnt proteins. Acts as a protein-serine O-palmitoleoyltransferase that catalyzes the attachment of palmitoleate, a 16-carbon monounsaturated fatty acid (C16:1(9Z)), to Wnt proteins. Serine palmitoleoylation of WNT proteins is required for efficient binding to frizzled receptors. Has a role in cell specification, specifically in blastomere signaling. Involved in cytosketetal polarity. Required for the orientation of mitotic spindle axis. The protein is Protein-serine O-palmitoleoyltransferase porcupine of Caenorhabditis briggsae.